Reading from the N-terminus, the 83-residue chain is Defensin-2 (83 aa).

The first 33 residues, 1-33 (MAGKGVGTPLSALFLLVLLVVTIGMMEVQVAEG), serve as a signal peptide directing secretion. 4 disulfides stabilise this stretch: cysteine 36/cysteine 82, cysteine 47/cysteine 67, cysteine 53/cysteine 76, and cysteine 57/cysteine 78.

Belongs to the DEFL family.

The protein localises to the secreted. Plant defense peptide. Has antifungal activity. This chain is Defensin-2, found in Pinus sylvestris (Scotch pine).